Consider the following 199-residue polypeptide: Putative 3-methyladenine DNA glycosylase (199 aa).

It belongs to the DNA glycosylase MPG family.

This chain is Putative 3-methyladenine DNA glycosylase, found in Chlorobium phaeobacteroides (strain BS1).